The chain runs to 43 residues: Protein PsbN (43 aa).

The helical transmembrane segment at 7–29 threads the bilayer; sequence LSIALAAVCIGVTGYSIYLSFGP.

The protein belongs to the PsbN family.

It is found in the cellular thylakoid membrane. May play a role in photosystem I and II biogenesis. The chain is Protein PsbN from Thermosynechococcus vestitus (strain NIES-2133 / IAM M-273 / BP-1).